The following is a 151-amino-acid chain: Endolysin (151 aa).

Zn(2+) is bound by residues histidine 18, histidine 123, and cysteine 131.

The protein belongs to the N-acetylmuramoyl-L-alanine amidase 2 family. As to quaternary structure, interacts with the viral RNA polymerase. The cofactor is Zn(2+).

Its subcellular location is the host cytoplasm. The catalysed reaction is Hydrolyzes the link between N-acetylmuramoyl residues and L-amino acid residues in certain cell-wall glycopeptides.. With respect to regulation, binding to the viral RNA polymerase inhibits amidase activity. In terms of biological role, endolysin with amidase activity that degrades host peptidoglycans and participates with the holin and spanin proteins in the sequential events which lead to the programmed host cell lysis releasing the mature viral particles. Once the holin has permeabilized the host cell membrane, the endolysin can reach the periplasm and breaking down the peptidoglycan layer. Plays an important role in the switch between viral transcription and genome replication. Once produced in sufficient amount, interacts with and inhibits the viral RNA polymerase that becomes unable to produce additional late transcripts. This lysozyme-polymerase complex in turn plays an active role in viral genome replication and packaging. The protein is Endolysin of Klebsiella pneumoniae (Bacteriophage KP32).